The primary structure comprises 229 residues: Mediator of RNA polymerase II transcription subunit 7 (229 aa).

It belongs to the Mediator complex subunit 7 family. As to quaternary structure, component of the Mediator complex.

It localises to the nucleus. Functionally, component of the Mediator complex, a coactivator involved in the regulated transcription of nearly all RNA polymerase II-dependent genes. Mediator functions as a bridge to convey information from gene-specific regulatory proteins to the basal RNA polymerase II transcription machinery. Mediator is recruited to promoters by direct interactions with regulatory proteins and serves as a scaffold for the assembly of a functional preinitiation complex with RNA polymerase II and the general transcription factors. This chain is Mediator of RNA polymerase II transcription subunit 7 (med7), found in Xenopus tropicalis (Western clawed frog).